The primary structure comprises 251 residues: UPF0309 protein SAV_3856 (251 aa).

Positions 36-220 (IADTVADGGR…AGTLADRGIE (185 aa)) constitute an SIS domain.

This sequence belongs to the UPF0309 family.

The polypeptide is UPF0309 protein SAV_3856 (Streptomyces avermitilis (strain ATCC 31267 / DSM 46492 / JCM 5070 / NBRC 14893 / NCIMB 12804 / NRRL 8165 / MA-4680)).